Consider the following 141-residue polypeptide: MLTADDKKLIQTTWDKVQGHQEDFGAEALQRMFITYPQTKTYFPHFDLSPGSDQVRGHGKKVVNALGNAVKSMDNLSQALSELSNLHAYNLRVDPVNFKLLSQCFQVVLAVHLGKEYTPEVHSAFDKFLSAVAAVLAEKYR.

The 141-residue stretch at 1-141 (MLTADDKKLI…VAAVLAEKYR (141 aa)) folds into the Globin domain. Heme b-binding residues include His-58 and His-87.

The protein belongs to the globin family. As to quaternary structure, heterotetramer of two alpha-D chains and two beta chains. In terms of tissue distribution, red blood cells.

Its function is as follows. Involved in oxygen transport from the lung to the various peripheral tissues. The sequence is that of Hemoglobin subunit alpha-D/D' (HBAD) from Gyps rueppelli (Rueppell's griffon).